A 473-amino-acid chain; its full sequence is Glutamate--tRNA ligase 1 (473 aa).

Positions 11–21 (PSPTGYLHIGG) match the 'HIGH' region motif. Over residues 113–133 (KARAEGRPPRYDGRWRDRDPS) the composition is skewed to basic and acidic residues. Residues 113-136 (KARAEGRPPRYDGRWRDRDPSEAP) form a disordered region. Residues 240 to 244 (KLSKR) carry the 'KMSKS' region motif. ATP is bound at residue K243.

It belongs to the class-I aminoacyl-tRNA synthetase family. Glutamate--tRNA ligase type 1 subfamily. Monomer.

Its subcellular location is the cytoplasm. The catalysed reaction is tRNA(Glu) + L-glutamate + ATP = L-glutamyl-tRNA(Glu) + AMP + diphosphate. In terms of biological role, catalyzes the attachment of glutamate to tRNA(Glu) in a two-step reaction: glutamate is first activated by ATP to form Glu-AMP and then transferred to the acceptor end of tRNA(Glu). This is Glutamate--tRNA ligase 1 from Brucella melitensis biotype 1 (strain ATCC 23456 / CCUG 17765 / NCTC 10094 / 16M).